The sequence spans 238 residues: Dolichyldiphosphatase 1 (238 aa).

The next 4 membrane-spanning stretches (helical) occupy residues 33–53 (LAYLSLSPVFVIVGFVTLIIF), 100–120 (PSSHSQFMWFFSVYSFLFLYL), 130–150 (FLDLLWRHVLSLGLLAAAFLV), and 162–182 (WSQVLYGGIAGGLMAVAWFIF).

This sequence belongs to the dolichyldiphosphatase family.

Its subcellular location is the endoplasmic reticulum membrane. It carries out the reaction a di-trans,poly-cis-dolichyl diphosphate + H2O = a di-trans,poly-cis-dolichyl phosphate + phosphate + H(+). It participates in protein modification; protein glycosylation. Its function is as follows. Required for efficient N-glycosylation. Necessary for maintaining optimal levels of dolichol-linked oligosaccharides. Hydrolyzes dolichyl pyrophosphate at a very high rate and dolichyl monophosphate at a much lower rate. Does not act on phosphatidate. The polypeptide is Dolichyldiphosphatase 1 (DOLPP1) (Callithrix jacchus (White-tufted-ear marmoset)).